The following is a 400-amino-acid chain: NADH-ubiquinone oxidoreductase 49 kDa subunit (400 aa).

The protein belongs to the complex I 49 kDa subunit family.

It is found in the mitochondrion. It catalyses the reaction a ubiquinone + NADH + 5 H(+)(in) = a ubiquinol + NAD(+) + 4 H(+)(out). Its function is as follows. Core subunit of the mitochondrial membrane respiratory chain NADH dehydrogenase (Complex I) that is believed to belong to the minimal assembly required for catalysis. Complex I functions in the transfer of electrons from NADH to the respiratory chain. The immediate electron acceptor for the enzyme is believed to be ubiquinone. Component of the iron-sulfur (IP) fragment of the enzyme. Component of the iron-sulfur (IP) fragment of the enzyme. The chain is NADH-ubiquinone oxidoreductase 49 kDa subunit (NAD7) from Prototheca wickerhamii.